We begin with the raw amino-acid sequence, 166 residues long: Cyclin-dependent kinase 4 inhibitor D (166 aa).

M1 is modified (N-acetylmethionine). 4 ANK repeats span residues 41–69 (FGKT…SPNV), 73–102 (SGTS…DVNA), 106–135 (TGSL…LHHR), and 138–165 (SGLT…MMIP).

It belongs to the CDKN2 cyclin-dependent kinase inhibitor family. In terms of assembly, interacts with CDK6.

Its subcellular location is the nucleus. It is found in the cytoplasm. Interacts strongly with CDK4 and CDK6 and inhibits them. In Mus musculus (Mouse), this protein is Cyclin-dependent kinase 4 inhibitor D (Cdkn2d).